The sequence spans 408 residues: MAKVVDRFISYVKYSTTSKEGSETFPSTEGQLKFARLLVDELKELGLNNVHLDEYGYVMATVPSNVDHKVPTIGFIAHMDTSPDMSGTNVKPQIVENYNGKDIVLNKSKNIILSPDNFPELKKYTGKTLITTDGTTLLGADDKAGIAEIITAVEHLMNNPEYPHGEIKIAFTPDEEIGQGADKFRVDKFGADFAYTVDGGPIGELEYENFNAARAKITVNGVNVHPGTAKNKMKNSLLIANELINMLPPAEIPAHTEGYEGFFHLMSVTGSVEQTRLDFIIRDFYKNKFEERKNLMVKIADYLNVKYGENTITLNLKDQYYNMKEKIKEHIHIVYTARRAMEEVGVTPRVNPIRGGTDGARLSYMGLPTPNLFTGGHNFHGRYEYIPVFAMEKAVDVILKIIELYATK.

Position 78 (His-78) interacts with Zn(2+). Asp-80 is an active-site residue. Asp-141 contacts Zn(2+). Catalysis depends on Glu-175, which acts as the Proton acceptor. Positions 176, 198, and 380 each coordinate Zn(2+).

The protein belongs to the peptidase M20B family. Zn(2+) serves as cofactor.

It is found in the cytoplasm. The enzyme catalyses Release of the N-terminal residue from a tripeptide.. Its function is as follows. Cleaves the N-terminal amino acid of tripeptides. The chain is Peptidase T from Halothermothrix orenii (strain H 168 / OCM 544 / DSM 9562).